The chain runs to 308 residues: Olfactory receptor 6F1 (308 aa).

Residues 1 to 25 (MDTGNKTLPQDFLLLGFPGSQTLQL) lie on the Extracellular side of the membrane. The N-linked (GlcNAc...) asparagine glycan is linked to Asn-5. A helical membrane pass occupies residues 26 to 46 (SLFMLFLVMYILTVSGNVAIL). Residues 47–54 (MLVSTSHQ) are Cytoplasmic-facing. A helical transmembrane segment spans residues 55-75 (LHTPMYFFLSNLSFLEIWYTT). At 76–99 (AAVPKALAILLGRSQTISFTSCLL) the chain is on the extracellular side. The cysteines at positions 97 and 189 are disulfide-linked. Residues 100–120 (QMYFVFSLGCTEYFLLAAMAY) form a helical membrane-spanning segment. Topologically, residues 121 to 139 (DRCLAICYPLHYGAIMSSL) are cytoplasmic. The chain crosses the membrane as a helical span at residues 140–160 (LSAQLALGSWVCGFVAIAVPT). Residues 161-197 (ALISGLSFCGPRAINHFFCDIAPWIALACTNTQAVEL) lie on the Extracellular side of the membrane. Residues 198–217 (VAFVIAVVVILSSCLITFVS) form a helical membrane-spanning segment. Topologically, residues 218–237 (YVYIISTILRIPSASGRSKA) are cytoplasmic. Residues 238-258 (FSTCSSHLTVVLIWYGSTVFL) form a helical membrane-spanning segment. Residues 259–271 (HVRTSIKDALDLI) are Extracellular-facing. A helical membrane pass occupies residues 272 to 292 (KAVHVLNTVVTPVLNPFIYTL). Residues 293 to 308 (RNKEVRETLLKKWKGK) lie on the Cytoplasmic side of the membrane.

Belongs to the G-protein coupled receptor 1 family.

Its subcellular location is the cell membrane. In terms of biological role, odorant receptor. This chain is Olfactory receptor 6F1 (OR6F1), found in Homo sapiens (Human).